The chain runs to 412 residues: Alanyl-tRNA editing protein Aarsd1-A (412 aa).

Positions 108, 112, 208, and 212 each coordinate Zn(2+).

It belongs to the class-II aminoacyl-tRNA synthetase family. Alax-L subfamily. Zn(2+) serves as cofactor.

The protein resides in the cytoplasm. Functions in trans to edit the amino acid moiety from incorrectly charged tRNA(Ala). This Xenopus laevis (African clawed frog) protein is Alanyl-tRNA editing protein Aarsd1-A (aarsd1-a).